The sequence spans 437 residues: Flagellar biosynthesis protein FlhF (437 aa).

GTP-binding positions include 225-232, 303-307, and 361-364; these read GPAGMGKT, DTAGL, and TKLD.

It belongs to the GTP-binding SRP family.

It is found in the cell membrane. In terms of biological role, necessary for flagellar biosynthesis. May be involved in translocation of the flagellum. This chain is Flagellar biosynthesis protein FlhF (flhF), found in Pseudomonas putida (Arthrobacter siderocapsulatus).